A 66-amino-acid polypeptide reads, in one-letter code: UPF0370 protein YpfN (66 aa).

Residues 4 to 24 traverse the membrane as a helical segment; the sequence is LAKYWWILVLVFLVGVLLNVI. The interval 39-66 is disordered; that stretch reads KPELPPHRDFNDKWDDEDDWPKKDQPKK. Positions 42–51 are enriched in basic and acidic residues; that stretch reads LPPHRDFNDK.

This sequence belongs to the UPF0370 family.

The protein resides in the cell membrane. This Salmonella paratyphi C (strain RKS4594) protein is UPF0370 protein YpfN.